Here is a 471-residue protein sequence, read N- to C-terminus: Glutamate--tRNA ligase (471 aa).

The 'HIGH' region signature appears at 9–19; it reads PSPTGYLHVGG. 4 residues coordinate Zn(2+): C98, C100, C125, and D127. Residues 237–241 carry the 'KMSKS' region motif; that stretch reads KLSKR. Residue K240 coordinates ATP.

This sequence belongs to the class-I aminoacyl-tRNA synthetase family. Glutamate--tRNA ligase type 1 subfamily. Monomer. It depends on Zn(2+) as a cofactor.

It localises to the cytoplasm. The enzyme catalyses tRNA(Glu) + L-glutamate + ATP = L-glutamyl-tRNA(Glu) + AMP + diphosphate. Functionally, catalyzes the attachment of glutamate to tRNA(Glu) in a two-step reaction: glutamate is first activated by ATP to form Glu-AMP and then transferred to the acceptor end of tRNA(Glu). This is Glutamate--tRNA ligase from Yersinia pestis.